Consider the following 166-residue polypeptide: Large ribosomal subunit protein bL9 (166 aa).

It belongs to the bacterial ribosomal protein bL9 family.

In terms of biological role, binds to the 23S rRNA. In Psychrobacter arcticus (strain DSM 17307 / VKM B-2377 / 273-4), this protein is Large ribosomal subunit protein bL9.